The chain runs to 875 residues: Leucine--tRNA ligase (875 aa).

Positions 57–67 match the 'HIGH' region motif; the sequence is PYPSGQIHMGH. Residues 631-635 carry the 'KMSKS' region motif; sequence KMSKS. Residue Lys634 participates in ATP binding.

This sequence belongs to the class-I aminoacyl-tRNA synthetase family.

The protein resides in the cytoplasm. The enzyme catalyses tRNA(Leu) + L-leucine + ATP = L-leucyl-tRNA(Leu) + AMP + diphosphate. This is Leucine--tRNA ligase from Granulibacter bethesdensis (strain ATCC BAA-1260 / CGDNIH1).